The following is a 175-amino-acid chain: Translation initiation factor IF-3 (175 aa).

The protein belongs to the IF-3 family. In terms of assembly, monomer.

The protein resides in the cytoplasm. Its function is as follows. IF-3 binds to the 30S ribosomal subunit and shifts the equilibrium between 70S ribosomes and their 50S and 30S subunits in favor of the free subunits, thus enhancing the availability of 30S subunits on which protein synthesis initiation begins. The chain is Translation initiation factor IF-3 from Staphylococcus carnosus (strain TM300).